A 485-amino-acid polypeptide reads, in one-letter code: MIQHTNARQSSVAIAPLRQLVSDSPEQWGYWLGRKHYSLEVVQHPLRARMCGFGDKDRRPLAPAAVAKMVVRRDDNSIVDVDDMDCSFFLVTVDLWSEDGKHETNLVLHPSSVDRHIPPHSSTKSRRRGTSSSAPQSRAPANQTPSGGSTPTLSQHRPGEQRPPLPHPHASGYNNQGYVTPHAPQVNDALGFPPSTPYGPTQADSSWGYPPPPPGDRSTSFPHPTLPSIHTLGRSPSSSTSDHWNSEPEPQSLPYGAWNTDAPYHPSISSYSNSQVDPSVRNHSNSEGIENPGWSSSEATSPHSQADHAAYESSTYHHSAYHPAPTHSQMAPGTCSSQHVSTVPPPPRHTYTRTLVGPLSANACRLLDEHRKPGIFFLFQDLSVRTEGTFRLRMRLMNVGAPPAPEVGAARVHNDVSPVLAQTFTEQFTVYSAKRFPGVPDTTALSIALGNQGQKLPLASDGLSEALVEESSRVQQASETQWFRV.

The Velvet domain occupies 33–459 (GRKHYSLEVV…GNQGQKLPLA (427 aa)). Residues 107-353 (VLHPSSVDRH…PPPPRHTYTR (247 aa)) are disordered. 4 stretches are compositionally biased toward polar residues: residues 134 to 155 (APQSRAPANQTPSGGSTPTLSQ), 234 to 243 (RSPSSSTSDH), 267 to 304 (SISSYSNSQVDPSVRNHSNSEGIENPGWSSSEATSPHS), and 326 to 341 (THSQMAPGTCSSQHVS).

Belongs to the velvet family. VelB subfamily. As to quaternary structure, component of the heterotrimeric velvet complex composed of laeA, veA and velB; VeA acting as a bridging protein between laeA and velB. Forms a heterodimeric complex with vosA; the formation of the velB-vosA complex is light-dependent.

Its subcellular location is the nucleus. The protein localises to the cytoplasm. In terms of biological role, component of the velvet transcription factor complex that controls sexual/asexual developmental ratio in response to light, promoting sexual development in the darkness while stimulating asexual sporulation under illumination. The velvet complex acts as a global regulator for secondary metabolite gene expression. Component of the velB-VosA heterodimeric complex that plays a dual role in activating genes associated with spore maturation and repressing certain development-associated genes. The velB-VosA complex binds DNA through the DNA-binding domain of vosA that recognizes an 11-nucleotide consensus sequence 5'-CTGGCCGCGGC-3' consisting of two motifs in the promoters of key developmental regulatory genes. The polypeptide is Velvet complex subunit B (Laccaria bicolor (strain S238N-H82 / ATCC MYA-4686) (Bicoloured deceiver)).